Reading from the N-terminus, the 133-residue chain is Small ribosomal subunit protein uS9 (133 aa).

Basic and acidic residues predominate over residues 102–113; it reads KVEGYLSRDPRA. The interval 102-133 is disordered; the sequence is KVEGYLSRDPRAKERRKYGLKKARKAPQFSKR. Positions 114–133 are enriched in basic residues; that stretch reads KERRKYGLKKARKAPQFSKR.

Belongs to the universal ribosomal protein uS9 family.

In Gloeobacter violaceus (strain ATCC 29082 / PCC 7421), this protein is Small ribosomal subunit protein uS9.